Consider the following 349-residue polypeptide: Phosphate acyltransferase (349 aa).

The protein belongs to the PlsX family. In terms of assembly, homodimer. Probably interacts with PlsY.

The protein resides in the cytoplasm. The enzyme catalyses a fatty acyl-[ACP] + phosphate = an acyl phosphate + holo-[ACP]. The protein operates within lipid metabolism; phospholipid metabolism. Catalyzes the reversible formation of acyl-phosphate (acyl-PO(4)) from acyl-[acyl-carrier-protein] (acyl-ACP). This enzyme utilizes acyl-ACP as fatty acyl donor, but not acyl-CoA. The protein is Phosphate acyltransferase of Colwellia psychrerythraea (strain 34H / ATCC BAA-681) (Vibrio psychroerythus).